A 207-amino-acid chain; its full sequence is Large ribosomal subunit protein uL4 (207 aa).

Residues 48-85 form a disordered region; sequence THKVKNRSEVRGGGRKPWRQKGTGRARQGSIRSPQWRG. Over residues 60–71 the composition is skewed to basic residues; sequence GGRKPWRQKGTG.

This sequence belongs to the universal ribosomal protein uL4 family. In terms of assembly, part of the 50S ribosomal subunit.

Functionally, one of the primary rRNA binding proteins, this protein initially binds near the 5'-end of the 23S rRNA. It is important during the early stages of 50S assembly. It makes multiple contacts with different domains of the 23S rRNA in the assembled 50S subunit and ribosome. Forms part of the polypeptide exit tunnel. This Bacillus subtilis (strain 168) protein is Large ribosomal subunit protein uL4.